A 1843-amino-acid polypeptide reads, in one-letter code: Zinc finger protein 142 (1843 aa).

C2H2-type zinc fingers lie at residues 103-127 (YFCE…TETH) and 164-186 (LPCP…FKIH). The disordered stretch occupies residues 294 to 357 (PAAKLPPGHR…LEGHVGSGTE (64 aa)). The segment covering 318-329 (SAEEEDAEEEES) has biased composition (acidic residues). The span at 330-340 (VTQKDSQKVMD) shows a compositional bias: basic and acidic residues. Ser-354 bears the Phosphoserine mark. A C2H2-type 3 zinc finger spans residues 363-385 (HMCPECKRCFKKRTHLVEHLHLH). The segment at 391–413 (LQCPNCQKFFTSKSKLKTHLLRE) adopts a C2H2-type 4; degenerate zinc-finger fold. 7 consecutive C2H2-type zinc fingers follow at residues 453–475 (YACP…LKSH), 543–566 (FHCP…KQGH), 601–623 (HQCS…MLLH), 629–651 (HKCE…MLTH), 657–679 (YMCT…MRKH), 685–707 (YQCN…KLRH), and 744–767 (YPCR…NCKH). Lys-794 is covalently cross-linked (Glycyl lysine isopeptide (Lys-Gly) (interchain with G-Cter in SUMO2)). Disordered stretches follow at residues 819–888 (QCLA…LGEV) and 1103–1177 (PKPV…TGTS). A compositionally biased stretch (basic and acidic residues) spans 837-846 (PEREDREHEI). The segment covering 1157-1167 (LPTPSDFPTSP) has biased composition (pro residues). The segment covering 1168–1177 (PENSLPTGTS) has biased composition (polar residues). C2H2-type zinc fingers lie at residues 1331 to 1354 (LQCG…RLKH), 1388 to 1411 (IPCS…LRVH), 1446 to 1469 (FSCT…LRRH), 1514 to 1537 (LECG…RQHH), 1608 to 1630 (YKCT…SRIH), 1636 to 1658 (YHCH…MRIH), 1664 to 1686 (YLCP…MTKH), 1692 to 1715 (YQCP…ETRH), and 1721 to 1743 (FMCE…LRKH). Residues Lys-1353 and Lys-1402 each participate in a glycyl lysine isopeptide (Lys-Gly) (interchain with G-Cter in SUMO2) cross-link. Lys-1747 participates in a covalent cross-link: Glycyl lysine isopeptide (Lys-Gly) (interchain with G-Cter in SUMO2). A C2H2-type 21 zinc finger spans residues 1749 to 1771 (YVCNVCHRAFRWAAGLRHHALTH). The tract at residues 1795–1843 (HVRRHHPDQADPNQGVGKDPTTPTVHLHDVKLEDPSPPAPPAPSTGPEG) is disordered. Positions 1829–1843 (PSPPAPPAPSTGPEG) are enriched in pro residues.

Belongs to the krueppel C2H2-type zinc-finger protein family.

Its subcellular location is the nucleus. In terms of biological role, may be involved in transcriptional regulation. In Mus musculus (Mouse), this protein is Zinc finger protein 142.